The primary structure comprises 93 residues: MPRSLKKGPFVDDHLLKKVDALNESGKKTVIKTWSRRSTIIPDMLGHTFAVHDGRKHIPVFVNESMVGHKLGEFAPTRTFKGHVKDDRKSRRR.

Belongs to the universal ribosomal protein uS19 family.

Functionally, protein S19 forms a complex with S13 that binds strongly to the 16S ribosomal RNA. This chain is Small ribosomal subunit protein uS19, found in Saccharopolyspora erythraea (strain ATCC 11635 / DSM 40517 / JCM 4748 / NBRC 13426 / NCIMB 8594 / NRRL 2338).